Reading from the N-terminus, the 112-residue chain is Putative pterin-4-alpha-carbinolamine dehydratase (112 aa).

Belongs to the pterin-4-alpha-carbinolamine dehydratase family.

It carries out the reaction (4aS,6R)-4a-hydroxy-L-erythro-5,6,7,8-tetrahydrobiopterin = (6R)-L-erythro-6,7-dihydrobiopterin + H2O. In Shewanella oneidensis (strain ATCC 700550 / JCM 31522 / CIP 106686 / LMG 19005 / NCIMB 14063 / MR-1), this protein is Putative pterin-4-alpha-carbinolamine dehydratase.